Here is a 306-residue protein sequence, read N- to C-terminus: Histone-lysine N-methyltransferase SETMAR (306 aa).

Positions 60 to 123 constitute a Pre-SET domain; the sequence is PGCACLKTPC…RCRNRVVQWG (64 aa). Residues Cys62, Cys64, Cys69, Cys74, Cys76, Cys105, Cys109, Cys111, and Cys115 each coordinate Zn(2+). An SET domain is found at 126–250; that stretch reads FHLQVFKTDH…PEEELSYDYS (125 aa). Residues 136 to 138, Tyr179, Arg207, and 210 to 211 contribute to the S-adenosyl-L-methionine site; these read KGW and NH. Zn(2+)-binding residues include Cys213, Cys274, Cys276, and Cys281. Residues 270–286 form the Post-SET domain; sequence LRKPCYCGARSCAAFLP.

Belongs to the class V-like SAM-binding methyltransferase superfamily.

It is found in the nucleus. The protein localises to the chromosome. The catalysed reaction is L-lysyl(36)-[histone H3] + 2 S-adenosyl-L-methionine = N(6),N(6)-dimethyl-L-lysyl(36)-[histone H3] + 2 S-adenosyl-L-homocysteine + 2 H(+). Histone methyltransferase that methylates 'Lys-4' and 'Lys-36' of histone H3, 2 specific tags for epigenetic transcriptional activation. Specifically mediates dimethylation of H3 'Lys-36'. The polypeptide is Histone-lysine N-methyltransferase SETMAR (Bos taurus (Bovine)).